A 217-amino-acid chain; its full sequence is Serine acetyltransferase (217 aa).

Belongs to the transferase hexapeptide repeat family.

The protein resides in the cytoplasm. The catalysed reaction is L-serine + acetyl-CoA = O-acetyl-L-serine + CoA. It functions in the pathway amino-acid biosynthesis; L-cysteine biosynthesis; L-cysteine from L-serine: step 1/2. Inhibited by cysteine. Its function is as follows. Catalyzes the acetylation of serine by acetyl-CoA to produce O-acetylserine (OAS). This chain is Serine acetyltransferase, found in Bacillus pumilus (strain SAFR-032).